The sequence spans 337 residues: DNA-directed RNA polymerase subunit alpha (337 aa).

An alpha N-terminal domain (alpha-NTD) region spans residues 1 to 233 (MIQKNWQELI…DQLSIFVNFE (233 aa)). Residues 249 to 337 (FNPALLKKVD…DLAKRYEDQY (89 aa)) form an alpha C-terminal domain (alpha-CTD) region.

This sequence belongs to the RNA polymerase alpha chain family. Homodimer. The RNAP catalytic core consists of 2 alpha, 1 beta, 1 beta' and 1 omega subunit. When a sigma factor is associated with the core the holoenzyme is formed, which can initiate transcription.

The catalysed reaction is RNA(n) + a ribonucleoside 5'-triphosphate = RNA(n+1) + diphosphate. DNA-dependent RNA polymerase catalyzes the transcription of DNA into RNA using the four ribonucleoside triphosphates as substrates. This is DNA-directed RNA polymerase subunit alpha from Brucella melitensis biotype 2 (strain ATCC 23457).